A 379-amino-acid chain; its full sequence is Cytochrome b (379 aa).

4 helical membrane passes run 34-54 (FGSL…LLAT), 78-99 (WLIR…YLHI), 114-134 (WNIG…GYVL), and 179-199 (FFAL…IHLT). Histidine 84 and histidine 98 together coordinate heme b. Heme b-binding residues include histidine 183 and histidine 197. Histidine 202 contacts a ubiquinone. The next 4 helical transmembrane spans lie at 227–247 (TKDM…AFFF), 289–309 (LGGV…PLLH), 321–341 (MSQL…WIGS), and 348–368 (FIII…FLFP).

This sequence belongs to the cytochrome b family. As to quaternary structure, the cytochrome bc1 complex contains 11 subunits: 3 respiratory subunits (MT-CYB, CYC1 and UQCRFS1), 2 core proteins (UQCRC1 and UQCRC2) and 6 low-molecular weight proteins (UQCRH/QCR6, UQCRB/QCR7, UQCRQ/QCR8, UQCR10/QCR9, UQCR11/QCR10 and a cleavage product of UQCRFS1). This cytochrome bc1 complex then forms a dimer. Heme b is required as a cofactor.

The protein resides in the mitochondrion inner membrane. Functionally, component of the ubiquinol-cytochrome c reductase complex (complex III or cytochrome b-c1 complex) that is part of the mitochondrial respiratory chain. The b-c1 complex mediates electron transfer from ubiquinol to cytochrome c. Contributes to the generation of a proton gradient across the mitochondrial membrane that is then used for ATP synthesis. This is Cytochrome b (MT-CYB) from Tinamus major (Great tinamou).